Consider the following 300-residue polypeptide: MNSLTKSINLDKVSYPQSTVKDYILLMKPRVMSLVVFTGFSGMWLAPNSLHPFISVIALICIAIGAGSAGAINMWYDRDIDALMKRTQKRPIVRGAIEADEALSFGLIMAFFSVFFMALCVNFLSALLLLFTIFYYICIYTMWLKRSSIQNIVIGGAAGALPPVIGYASVSGSVSLDSVILFLIIFIWTPPHSWALALFCNDDYKNCKVPMMPVIKGALYTKKQILIYSVLLFLTSLMPFFVGMSNIIYLVIAAVLGLVFLYYSISLFYDNADNKQAKRFFAYSIFYLFFIFLLLDFCRV.

Helical transmembrane passes span 31–51 (VMSLVVFTGFSGMWLAPNSLH), 52–72 (PFISVIALICIAIGAGSAGAI), 92–112 (IVRGAIEADEALSFGLIMAFF), 123–145 (FLSALLLLFTIFYYICIYTMWLK), 152–172 (IVIGGAAGALPPVIGYASVSG), 179–199 (VILFLIIFIWTPPHSWALALF), 225–245 (ILIYSVLLFLTSLMPFFVGMS), 247–267 (IIYLVIAAVLGLVFLYYSISL), and 280–300 (FFAYSIFYLFFIFLLLDFCRV).

This sequence belongs to the UbiA prenyltransferase family. Protoheme IX farnesyltransferase subfamily.

It localises to the cell inner membrane. The catalysed reaction is heme b + (2E,6E)-farnesyl diphosphate + H2O = Fe(II)-heme o + diphosphate. The protein operates within porphyrin-containing compound metabolism; heme O biosynthesis; heme O from protoheme: step 1/1. Functionally, converts heme B (protoheme IX) to heme O by substitution of the vinyl group on carbon 2 of heme B porphyrin ring with a hydroxyethyl farnesyl side group. In Rickettsia bellii (strain OSU 85-389), this protein is Protoheme IX farnesyltransferase.